A 168-amino-acid polypeptide reads, in one-letter code: Photosystem I assembly protein Ycf3 (168 aa).

3 TPR repeats span residues 35–68 (AFTY…EIDP), 72–105 (SYIL…NPFL), and 120–153 (GEQA…TPGN).

The protein belongs to the Ycf3 family.

The protein localises to the plastid. It is found in the chloroplast thylakoid membrane. Its function is as follows. Essential for the assembly of the photosystem I (PSI) complex. May act as a chaperone-like factor to guide the assembly of the PSI subunits. The sequence is that of Photosystem I assembly protein Ycf3 from Ipomoea purpurea (Common morning glory).